A 228-amino-acid polypeptide reads, in one-letter code: Carbonic anhydrase (228 aa).

Zn(2+) is bound by residues C56, D58, H112, and C115.

It belongs to the beta-class carbonic anhydrase family. It depends on Zn(2+) as a cofactor.

It catalyses the reaction hydrogencarbonate + H(+) = CO2 + H2O. Functionally, catalyzes the reversible hydration of CO(2) to H(2)CO(3). The main role may be to provide inorganic carbon for the bicarbonate-dependent carboxylation reactions catalyzed by pyruvate carboxylase, acetyl-CoA carboxylase and carbamoyl-phosphate synthetase. Involved in osmoadaptation. This chain is Carbonic anhydrase, found in Emericella nidulans (strain FGSC A4 / ATCC 38163 / CBS 112.46 / NRRL 194 / M139) (Aspergillus nidulans).